The following is a 131-amino-acid chain: Norrin (131 aa).

The N-terminal stretch at 1–24 is a signal peptide; the sequence is MRNHVLAASISMLSLLAIMGDTDS. Intrachain disulfides connect cysteine 37–cysteine 94, cysteine 53–cysteine 108, cysteine 63–cysteine 124, and cysteine 67–cysteine 126. The 94-residue stretch at 37 to 130 folds into the CTCK domain; the sequence is CMRHHYVDSI…ILSCHCEECS (94 aa).

In terms of assembly, homodimer; disulfide-linked. Component of a complex, at least composed of TSPAN12, FZD4, LRP5/6 and norrin (NDP). Binds FZD4 with high affinity. Interacts with LRP6 (via Beta-propellers 1 and 2). Expressed in the outer nuclear, inner nuclear and ganglion cell layers of the retina.

It localises to the secreted. Its function is as follows. Activates the canonical Wnt signaling pathway through FZD4 and LRP5 coreceptor. Plays a central role in retinal vascularization by acting as a ligand for FZD4 that signals via stabilizing beta-catenin (CTNNB1) and activating LEF/TCF-mediated transcriptional programs. Acts in concert with TSPAN12 to activate FZD4 independently of the Wnt-dependent activation of FZD4, suggesting the existence of a Wnt-independent signaling that also promote accumulation the beta-catenin (CTNNB1). May be involved in a pathway that regulates neural cell differentiation and proliferation. Possible role in neuroectodermal cell-cell interaction. This chain is Norrin (Ndp), found in Mus musculus (Mouse).